The sequence spans 194 residues: Ribosome maturation factor RimM (194 aa).

A PRC barrel domain is found at 113–194 (DGEYYWIDLI…RIVADWGLDY (82 aa)).

The protein belongs to the RimM family. In terms of assembly, binds ribosomal protein uS19.

The protein resides in the cytoplasm. In terms of biological role, an accessory protein needed during the final step in the assembly of 30S ribosomal subunit, possibly for assembly of the head region. Essential for efficient processing of 16S rRNA. May be needed both before and after RbfA during the maturation of 16S rRNA. It has affinity for free ribosomal 30S subunits but not for 70S ribosomes. This chain is Ribosome maturation factor RimM, found in Leptothrix cholodnii (strain ATCC 51168 / LMG 8142 / SP-6) (Leptothrix discophora (strain SP-6)).